A 646-amino-acid chain; its full sequence is Probable lysosomal cobalamin transporter (646 aa).

The next 5 membrane-spanning stretches (helical) occupy residues 11-31 (LIWV…VITT), 42-62 (IAVS…VFLL), 102-122 (TLYT…YFWF), 149-169 (LGFV…PAAG), and 193-213 (ALTF…ILYT). Asn297 is a glycosylation site (N-linked (GlcNAc...) asparagine). A run of 2 helical transmembrane segments spans residues 317–337 (LLGG…MLIT) and 380–400 (ILMA…LATI). Disordered regions lie at residues 459 to 588 (QPAA…PPRR) and 603 to 623 (VGRA…DKKE). Low complexity-rich tracts occupy residues 460 to 490 (PAAA…SPAA) and 517 to 543 (PSTS…RTPR). N-linked (GlcNAc...) asparagine glycosylation is present at Asn545. Over residues 565–582 (APAAALARPGAISPAAPR) the composition is skewed to low complexity. An N-linked (GlcNAc...) asparagine glycan is attached at Asn626.

The protein belongs to the LIMR family. LMBRD1 subfamily.

It localises to the lysosome membrane. In terms of biological role, probable lysosomal cobalamin transporter. Required to export cobalamin from lysosomes allowing its conversion to cofactors. This Chaetomium globosum (strain ATCC 6205 / CBS 148.51 / DSM 1962 / NBRC 6347 / NRRL 1970) (Soil fungus) protein is Probable lysosomal cobalamin transporter.